The following is a 232-amino-acid chain: Cytidylate kinase (232 aa).

The disordered stretch occupies residues 1–21 (MSEDTPLVVAMDGPSGTGKSS). 13–21 (GPSGTGKSS) serves as a coordination point for ATP.

It belongs to the cytidylate kinase family. Type 1 subfamily.

The protein localises to the cytoplasm. It carries out the reaction CMP + ATP = CDP + ADP. The enzyme catalyses dCMP + ATP = dCDP + ADP. The protein is Cytidylate kinase of Nocardia farcinica (strain IFM 10152).